The chain runs to 562 residues: Sesquiterpene synthase (562 aa).

Residues Asp315, Asp319, and Glu467 each coordinate Mg(2+). A DDXXD motif motif is present at residues 315-319; the sequence is DDIYD.

It belongs to the terpene synthase family. Tpsa subfamily. The cofactor is Mg(2+). Mn(2+) serves as cofactor.

Its function is as follows. Catalyzes the formation of beta-elemol, guaiol and bulnesol. The protein is Sesquiterpene synthase of Santalum spicatum (Australian sandalwood).